Reading from the N-terminus, the 40-residue chain is Large ribosomal subunit protein bL36B (40 aa).

The protein belongs to the bacterial ribosomal protein bL36 family.

This Streptomyces coelicolor (strain ATCC BAA-471 / A3(2) / M145) protein is Large ribosomal subunit protein bL36B.